Reading from the N-terminus, the 272-residue chain is HMP-PP phosphatase (272 aa).

Residue Asp-8 is the Nucleophile of the active site. Positions 8, 10, and 212 each coordinate Mg(2+).

Belongs to the HAD-like hydrolase superfamily. Cof family. Requires Mg(2+) as cofactor.

It carries out the reaction 4-amino-2-methyl-5-(diphosphooxymethyl)pyrimidine + H2O = 4-amino-2-methyl-5-(phosphooxymethyl)pyrimidine + phosphate + H(+). Catalyzes the hydrolysis of 4-amino-2-methyl-5-hydroxymethylpyrimidine pyrophosphate (HMP-PP) to 4-amino-2-methyl-5-hydroxymethylpyrimidine phosphate (HMP-P). The protein is HMP-PP phosphatase of Salmonella agona (strain SL483).